We begin with the raw amino-acid sequence, 251 residues long: Phosphate import ATP-binding protein PstB (251 aa).

In terms of domain architecture, ABC transporter spans 5–246 (IKIRGVNFFY…PKDKRTEDYI (242 aa)). 37 to 44 (GPSGCGKS) contacts ATP.

It belongs to the ABC transporter superfamily. Phosphate importer (TC 3.A.1.7) family. As to quaternary structure, the complex is composed of two ATP-binding proteins (PstB), two transmembrane proteins (PstC and PstA) and a solute-binding protein (PstS).

It localises to the cell membrane. The catalysed reaction is phosphate(out) + ATP + H2O = ADP + 2 phosphate(in) + H(+). Its function is as follows. Part of the ABC transporter complex PstSACB involved in phosphate import. Responsible for energy coupling to the transport system. This chain is Phosphate import ATP-binding protein PstB, found in Dehalococcoides mccartyi (strain ATCC BAA-2266 / KCTC 15142 / 195) (Dehalococcoides ethenogenes (strain 195)).